We begin with the raw amino-acid sequence, 309 residues long: Homoserine kinase (309 aa).

Position 91-101 (91-101 (PIGSGLGSSAC)) interacts with ATP.

This sequence belongs to the GHMP kinase family. Homoserine kinase subfamily.

Its subcellular location is the cytoplasm. The enzyme catalyses L-homoserine + ATP = O-phospho-L-homoserine + ADP + H(+). The protein operates within amino-acid biosynthesis; L-threonine biosynthesis; L-threonine from L-aspartate: step 4/5. Its function is as follows. Catalyzes the ATP-dependent phosphorylation of L-homoserine to L-homoserine phosphate. The protein is Homoserine kinase of Buchnera aphidicola subsp. Acyrthosiphon pisum (strain 5A).